A 283-amino-acid chain; its full sequence is DegV domain-containing protein BH3627 (283 aa).

Residues 4–281 enclose the DegV domain; that stretch reads IAIVTDSTAY…EGSIGLSWYI (278 aa). The hexadecanoate site is built by Thr-62 and Ser-95.

Functionally, may bind long-chain fatty acids, such as palmitate, and may play a role in lipid transport or fatty acid metabolism. The sequence is that of DegV domain-containing protein BH3627 from Halalkalibacterium halodurans (strain ATCC BAA-125 / DSM 18197 / FERM 7344 / JCM 9153 / C-125) (Bacillus halodurans).